The sequence spans 88 residues: Putative membrane protein insertion efficiency factor (88 aa).

Positions 66–88 (DFVPPKKEKNADSEHSCKAHHHH) are disordered. Over residues 69-82 (PPKKEKNADSEHSC) the composition is skewed to basic and acidic residues.

Belongs to the UPF0161 family.

Its subcellular location is the cell membrane. Its function is as follows. Could be involved in insertion of integral membrane proteins into the membrane. This chain is Putative membrane protein insertion efficiency factor, found in Listeria monocytogenes serotype 4b (strain CLIP80459).